A 367-amino-acid chain; its full sequence is tRNA-specific 2-thiouridylase MnmA (367 aa).

ATP-binding positions include 13–20 and Met39; that span reads GLSGGVDS. The interval 99–101 is interaction with target base in tRNA; sequence NPD. Cys104 functions as the Nucleophile in the catalytic mechanism. Cys104 and Cys200 are oxidised to a cystine. Gly128 contributes to the ATP binding site. Residues 150-152 are interaction with tRNA; the sequence is KDQ. Cys200 serves as the catalytic Cysteine persulfide intermediate. The interval 307–308 is interaction with tRNA; that stretch reads RY.

This sequence belongs to the MnmA/TRMU family.

It localises to the cytoplasm. It catalyses the reaction S-sulfanyl-L-cysteinyl-[protein] + uridine(34) in tRNA + AH2 + ATP = 2-thiouridine(34) in tRNA + L-cysteinyl-[protein] + A + AMP + diphosphate + H(+). In terms of biological role, catalyzes the 2-thiolation of uridine at the wobble position (U34) of tRNA, leading to the formation of s(2)U34. The chain is tRNA-specific 2-thiouridylase MnmA from Neisseria meningitidis serogroup A / serotype 4A (strain DSM 15465 / Z2491).